A 344-amino-acid chain; its full sequence is Nicotinate-nucleotide--dimethylbenzimidazole phosphoribosyltransferase (344 aa).

E305 serves as the catalytic Proton acceptor.

This sequence belongs to the CobT family.

The enzyme catalyses 5,6-dimethylbenzimidazole + nicotinate beta-D-ribonucleotide = alpha-ribazole 5'-phosphate + nicotinate + H(+). It functions in the pathway nucleoside biosynthesis; alpha-ribazole biosynthesis; alpha-ribazole from 5,6-dimethylbenzimidazole: step 1/2. In terms of biological role, catalyzes the synthesis of alpha-ribazole-5'-phosphate from nicotinate mononucleotide (NAMN) and 5,6-dimethylbenzimidazole (DMB). This is Nicotinate-nucleotide--dimethylbenzimidazole phosphoribosyltransferase from Agrobacterium fabrum (strain C58 / ATCC 33970) (Agrobacterium tumefaciens (strain C58)).